Reading from the N-terminus, the 190-residue chain is Ubiquinol-cytochrome c reductase iron-sulfur subunit (190 aa).

Residues 18-39 (FLYYATAGAGTVAAGAAAWTLV) form a helical membrane-spanning segment. Residues 95–188 (GQLIDRSAQN…AEFLDDTTIK (94 aa)) form the Rieske domain. The [2Fe-2S] cluster site is built by Cys132, His134, Cys152, and His155. A disulfide bridge links Cys137 with Cys154.

It belongs to the Rieske iron-sulfur protein family. In terms of assembly, the main subunits of complex b-c1 are: cytochrome b, cytochrome c1 and the Rieske protein. [2Fe-2S] cluster serves as cofactor.

Its subcellular location is the cell membrane. The enzyme catalyses a quinol + 2 Fe(III)-[cytochrome c](out) = a quinone + 2 Fe(II)-[cytochrome c](out) + 2 H(+)(out). In terms of biological role, component of the ubiquinol-cytochrome c reductase complex (complex III or cytochrome b-c1 complex), which is a respiratory chain that generates an electrochemical potential coupled to ATP synthesis. This Paracoccus denitrificans protein is Ubiquinol-cytochrome c reductase iron-sulfur subunit (petA).